Here is a 514-residue protein sequence, read N- to C-terminus: Serine--tRNA ligase, cytoplasmic (514 aa).

M1 bears the N-acetylmethionine mark. The tract at residues 9–61 is interaction with tRNA; that stretch reads RVDKGGDPALIRESQEKRFKDPGLVDQLVKADSEWRRCRFRADNLNKLKNLCS. S241 carries the phosphoserine modification. L-serine-binding residues include T271 and R302. ATP contacts are provided by residues 302–304 and 318–321; these read RQE and VHQF. K323 carries the post-translational modification N6-acetyllysine. Residue E325 coordinates L-serine. 391 to 394 serves as a coordination point for ATP; it reads ELVS. N427 provides a ligand contact to L-serine. Positions 475–514 are disordered; that stretch reads PIDQEPSKKQKKQHEGSKKKGAARDVALESQLQNMEVTDA. A compositionally biased stretch (basic and acidic residues) spans 479 to 501; it reads EPSKKQKKQHEGSKKKGAARDVA. The Nuclear localization signal signature appears at 482–494; the sequence is KKQKKQHEGSKKK. A compositionally biased stretch (polar residues) spans 504–514; sequence SQLQNMEVTDA.

It belongs to the class-II aminoacyl-tRNA synthetase family. Type-1 seryl-tRNA synthetase subfamily. Homodimer. The tRNA molecule may bind across the dimer. Interacts with SIRT2. Interacts with METTL6; interaction is required for the tRNA N(3)-methylcytidine methyltransferase activity of METTL6.

It localises to the cytoplasm. It is found in the nucleus. It carries out the reaction tRNA(Ser) + L-serine + ATP = L-seryl-tRNA(Ser) + AMP + diphosphate + H(+). The enzyme catalyses tRNA(Sec) + L-serine + ATP = L-seryl-tRNA(Sec) + AMP + diphosphate + H(+). Its pathway is aminoacyl-tRNA biosynthesis; selenocysteinyl-tRNA(Sec) biosynthesis; L-seryl-tRNA(Sec) from L-serine and tRNA(Sec): step 1/1. Catalyzes the attachment of serine to tRNA(Ser) in a two-step reaction: serine is first activated by ATP to form Ser-AMP and then transferred to the acceptor end of tRNA(Ser). Is probably also able to aminoacylate tRNA(Sec) with serine, to form the misacylated tRNA L-seryl-tRNA(Sec), which will be further converted into selenocysteinyl-tRNA(Sec). In the nucleus, binds to the VEGFA core promoter and prevents MYC binding and transcriptional activation by MYC. Recruits SIRT2 to the VEGFA promoter, promoting deacetylation of histone H4 at 'Lys-16' (H4K16). Thereby, inhibits the production of VEGFA and sprouting angiogenesis mediated by VEGFA. The chain is Serine--tRNA ligase, cytoplasmic (SARS1) from Bos taurus (Bovine).